The sequence spans 516 residues: Cytochrome P450 monooxygenase otaC (516 aa).

A helical transmembrane segment spans residues 13 to 30 (FLWTAFAVGVVYCCTRMV). C454 contacts heme.

Belongs to the cytochrome P450 family. Heme serves as cofactor.

It localises to the membrane. The enzyme catalyses 7-methylmellein + 3 reduced [NADPH--hemoprotein reductase] + 3 O2 = 7-carboxymellein + 3 oxidized [NADPH--hemoprotein reductase] + 4 H2O + 4 H(+). It participates in mycotoxin biosynthesis. Its function is as follows. Cytochrome P450 monooxygenase; part of the gene cluster that mediates the biosynthesis of ochratoxin A (OTA), a mycotoxin composed of a chlorinated type I polyketide dihydroisocoumarin moiety linked to L-phenylalanine, and demonstrated to have nephrotoxic, immunotoxic, genotoxic, neurotoxic, and teratogenic properties. OtaC catalyzes the oxidation of 7-methylmellein (7-MM) into 7-carboxymellein. The pathway begins with the highly reducing polyketide synthase otaA that catalyzes the formation of the isocoumarin group during the initial stages of biosynthesis, starting from one acetate and 4 malonate units, to originate the characteristic pentaketide skeleton 7-methylmellein (7-MM) of the OTA molecule. The newly identified cyclase otaY might be involved in the polyketide cyclization reaction during the initial steps of the OTA biosynthesis. 7-MM is then oxidized into 7-carboxymellein (also called ochratoxin beta) by the cytochrome P450 monooxygenase otaC. The NRPS encoded by the otaB gene is involved in the linking of phenylalanine to the dihydroisocoumarin ring. The reaction catalyzed by NRPS results in the production of ochratoxin B (OTB), which is the non-chlorinated analog of OTA and which subsequently serves as the substrate of the halogenase otaD for chlorination activity to form the final molecular structure of OTA, containing a chlorine atom in the C-5 position of the molecule. The chain is Cytochrome P450 monooxygenase otaC from Aspergillus carbonarius (strain ITEM 5010).